A 174-amino-acid polypeptide reads, in one-letter code: Peptidyl-prolyl cis-trans isomerase D, mitochondrial (174 aa).

The PPIase cyclophilin-type domain maps to 10-173; the sequence is FFQIKQGNTP…AACVIEDCGQ (164 aa).

The protein belongs to the cyclophilin-type PPIase family. PPIase D subfamily.

Its subcellular location is the mitochondrion. It catalyses the reaction [protein]-peptidylproline (omega=180) = [protein]-peptidylproline (omega=0). Its activity is regulated as follows. Binds cyclosporin A (CsA). CsA mediates some of its effects via an inhibitory action on PPIase. Its function is as follows. PPIases accelerate the folding of proteins. It catalyzes the cis-trans isomerization of proline imidic peptide bonds in oligopeptides. The sequence is that of Peptidyl-prolyl cis-trans isomerase D, mitochondrial (cypD) from Dictyostelium discoideum (Social amoeba).